A 386-amino-acid polypeptide reads, in one-letter code: Galactokinase (386 aa).

A substrate-binding site is contributed by 35-38; sequence EHTD. ATP-binding positions include Ser-69 and 125–131; that span reads GAGLSSS. Residues Ser-131 and Glu-163 each contribute to the Mg(2+) site. The Proton acceptor role is filled by Asp-175. Tyr-224 serves as a coordination point for substrate.

The protein belongs to the GHMP kinase family. GalK subfamily.

The protein resides in the cytoplasm. The enzyme catalyses alpha-D-galactose + ATP = alpha-D-galactose 1-phosphate + ADP + H(+). It functions in the pathway carbohydrate metabolism; galactose metabolism. Catalyzes the transfer of the gamma-phosphate of ATP to D-galactose to form alpha-D-galactose-1-phosphate (Gal-1-P). The polypeptide is Galactokinase (Vibrio vulnificus (strain CMCP6)).